We begin with the raw amino-acid sequence, 179 residues long: Large ribosomal subunit protein uL22c (179 aa).

This sequence belongs to the universal ribosomal protein uL22 family. As to quaternary structure, part of the 50S ribosomal subunit.

It is found in the plastid. It localises to the chloroplast. This protein binds specifically to 23S rRNA. Its function is as follows. The globular domain of the protein is located near the polypeptide exit tunnel on the outside of the subunit, while an extended beta-hairpin is found that lines the wall of the exit tunnel in the center of the 70S ribosome. This chain is Large ribosomal subunit protein uL22c (rpl22), found in Ranunculus macranthus (Large buttercup).